A 337-amino-acid polypeptide reads, in one-letter code: GTPase Obg (337 aa).

The Obg domain maps to M1–I158. Residues A159–S330 form the OBG-type G domain. Residues G165–S172, F190–Q194, D212–G215, N282–D285, and S311–V313 contribute to the GTP site. Residues S172 and T192 each coordinate Mg(2+).

This sequence belongs to the TRAFAC class OBG-HflX-like GTPase superfamily. OBG GTPase family. As to quaternary structure, monomer. The cofactor is Mg(2+).

The protein resides in the cytoplasm. Its function is as follows. An essential GTPase which binds GTP, GDP and possibly (p)ppGpp with moderate affinity, with high nucleotide exchange rates and a fairly low GTP hydrolysis rate. Plays a role in control of the cell cycle, stress response, ribosome biogenesis and in those bacteria that undergo differentiation, in morphogenesis control. This chain is GTPase Obg, found in Protochlamydia amoebophila (strain UWE25).